The primary structure comprises 76 residues: Exodeoxyribonuclease 7 small subunit (76 aa).

The protein belongs to the XseB family. As to quaternary structure, heterooligomer composed of large and small subunits.

The protein localises to the cytoplasm. The catalysed reaction is Exonucleolytic cleavage in either 5'- to 3'- or 3'- to 5'-direction to yield nucleoside 5'-phosphates.. Its function is as follows. Bidirectionally degrades single-stranded DNA into large acid-insoluble oligonucleotides, which are then degraded further into small acid-soluble oligonucleotides. The polypeptide is Exodeoxyribonuclease 7 small subunit (Staphylococcus aureus (strain Mu3 / ATCC 700698)).